The sequence spans 340 residues: PRKC apoptosis WT1 regulator protein (340 aa).

Positions 1 to 18 (MATGGYRTSSGLGGSTTD) are enriched in polar residues. Positions 1–253 (MATGGYRTSS…TDRSGFPRYN (253 aa)) are disordered. Positions 47-82 (SDAAGKPPAGALGTPAAAAANELNNNLPGGAPAAPA) are enriched in low complexity. The B30.2/SPRY domain-binding motif motif lies at 68 to 72 (ELNNN). Ser-108 carries the phosphoserine modification. The short motif at 145–161 (RKGKGQIEKRKLREKRR) is the Nuclear localization signal element. The segment at 145–203 (RKGKGQIEKRKLREKRRSTGVVNIPAAECLDEYEDDEAGQKERKREDAITQQNTIQNEA) is selective for apoptosis induction in cancer cells (SAC). Thr-163 is subject to Phosphothreonine; by PKA. Over residues 182-192 (AGQKERKREDA) the composition is skewed to basic and acidic residues. The stretch at 186-206 (ERKREDAITQQNTIQNEAVNL) forms a coiled coil. Over residues 193–203 (ITQQNTIQNEA) the composition is skewed to polar residues. Phosphoserine is present on Ser-231. Residues 242-253 (SRTDRSGFPRYN) show a composition bias toward basic and acidic residues. Residues 300–340 (IGKLKEEIDLLNRDLDDIEDENEQLKQENKTLLKVVGQLTR) are leucine-zipper.

Homooligomer. Interacts (via the C-terminal region) with WT1. Interacts with THAP1. Interacts with AATF. Interacts with BACE1. Interacts with SPSB1 (via B30.2/SPRY domain); this interaction is direct and occurs in association with the Elongin BC complex. Interacts with SPSB2 (via B30.2/SPRY domain); this interaction occurs in association with the Elongin BC complex. Interacts with SPSB4 (via B30.2/SPRY domain); this interaction occurs in association with the Elongin BC complex. Component of a ternary complex composed of SQSTM1 and PRKCZ. Interacts with actin. Preferentially phosphorylated at the Thr-163 by PKC in cancer cells. As to expression, widely expressed. Expression is elevated in various neurodegenerative diseases such as amyotrophic lateral sclerosis, Alzheimer, Parkinson and Huntington diseases and stroke. Down-regulated in several cancers.

It localises to the cytoplasm. The protein resides in the nucleus. In terms of biological role, pro-apoptotic protein capable of selectively inducing apoptosis in cancer cells, sensitizing the cells to diverse apoptotic stimuli and causing regression of tumors in animal models. Induces apoptosis in certain cancer cells by activation of the Fas prodeath pathway and coparallel inhibition of NF-kappa-B transcriptional activity. Inhibits the transcriptional activation and augments the transcriptional repression mediated by WT1. Down-regulates the anti-apoptotic protein BCL2 via its interaction with WT1. Also seems to be a transcriptional repressor by itself. May be directly involved in regulating the amyloid precursor protein (APP) cleavage activity of BACE1. This is PRKC apoptosis WT1 regulator protein (PAWR) from Homo sapiens (Human).